The sequence spans 333 residues: Protoheme IX farnesyltransferase (333 aa).

The next 8 helical transmembrane spans lie at 36 to 56 (LIPLLLATTLGGMALTEGWPL), 61 to 81 (LVCTLGGGALAAAAAGVLNCL), 107 to 127 (AAFAGAVSCALAAATLLVSGV), 130 to 150 (LAAGLSLLGLCSYVLLYTALL), 158 to 178 (IVIGGVAGAIPPLVGAAAATG), 186 to 206 (WLFALVMVWTPAHFWALALLL), 243 to 263 (FLGVWALPEGGLLYGLLLLPF), and 284 to 304 (AKGLFRWSILYLFGICLLLVF).

Belongs to the UbiA prenyltransferase family. Protoheme IX farnesyltransferase subfamily.

It localises to the cell inner membrane. It catalyses the reaction heme b + (2E,6E)-farnesyl diphosphate + H2O = Fe(II)-heme o + diphosphate. Its pathway is porphyrin-containing compound metabolism; heme O biosynthesis; heme O from protoheme: step 1/1. Functionally, converts heme B (protoheme IX) to heme O by substitution of the vinyl group on carbon 2 of heme B porphyrin ring with a hydroxyethyl farnesyl side group. This chain is Protoheme IX farnesyltransferase, found in Synechococcus sp. (strain WH7803).